The primary structure comprises 438 residues: Protein translocase subunit SecY (438 aa).

A run of 10 helical transmembrane segments spans residues 18-38 (ILFT…PSPG), 76-96 (VGVM…VVIP), 121-141 (IALA…GGLL), 154-174 (IFSL…VMWM), 177-197 (LITE…GIAA), 212-232 (GVIF…VVFV), 269-289 (VIPV…TQLV), 315-335 (PVYI…YVSV), 375-395 (LPGS…LQIG), and 398-418 (GEVQ…GVGL).

It belongs to the SecY/SEC61-alpha family. In terms of assembly, component of the Sec protein translocase complex. Heterotrimer consisting of SecY, SecE and SecG subunits. The heterotrimers can form oligomers, although 1 heterotrimer is thought to be able to translocate proteins. Interacts with the ribosome. Interacts with SecDF, and other proteins may be involved. Interacts with SecA.

The protein resides in the cell membrane. Functionally, the central subunit of the protein translocation channel SecYEG. Consists of two halves formed by TMs 1-5 and 6-10. These two domains form a lateral gate at the front which open onto the bilayer between TMs 2 and 7, and are clamped together by SecE at the back. The channel is closed by both a pore ring composed of hydrophobic SecY resides and a short helix (helix 2A) on the extracellular side of the membrane which forms a plug. The plug probably moves laterally to allow the channel to open. The ring and the pore may move independently. In Mycobacterium leprae (strain TN), this protein is Protein translocase subunit SecY.